Consider the following 102-residue polypeptide: Small ribosomal subunit protein uS10 (102 aa).

The protein belongs to the universal ribosomal protein uS10 family. Part of the 30S ribosomal subunit.

Involved in the binding of tRNA to the ribosomes. The polypeptide is Small ribosomal subunit protein uS10 (Acidithiobacillus ferrooxidans (strain ATCC 53993 / BNL-5-31) (Leptospirillum ferrooxidans (ATCC 53993))).